Reading from the N-terminus, the 438-residue chain is Phosphatidylcholine-sterol acyltransferase (438 aa).

The N-terminal stretch at 1 to 24 (MGLPGSPWQRVLLLLGLLLPPATP) is a signal peptide. N-linked (GlcNAc...) asparagine glycosylation is present at Asn44. The cysteines at positions 74 and 98 are disulfide-linked. Asn108 carries an N-linked (GlcNAc...) asparagine glycan. Ser205 serves as the catalytic Nucleophile. N-linked (GlcNAc...) asparagine glycosylation is present at Asn296. A disulfide bridge connects residues Cys337 and Cys380. Asp369 (charge relay system) is an active-site residue. Residue Asn397 is glycosylated (N-linked (GlcNAc...) asparagine). His401 functions as the Charge relay system in the catalytic mechanism. Asn408 carries N-linked (GlcNAc...) asparagine glycosylation.

Belongs to the AB hydrolase superfamily. Lipase family. As to expression, detected in blood plasma. Produced and secreted by astrocytes (at protein level). Abundantly expressed in liver, brain and testis with highest levels in liver. In the brain, found in cerebellum, cerebral cortex, hippocampus and brain stem. Located to neurons and neuroglia.

The protein localises to the secreted. The catalysed reaction is a sterol + a 1,2-diacyl-sn-glycero-3-phosphocholine = a sterol ester + a 1-acyl-sn-glycero-3-phosphocholine. It catalyses the reaction a 1-O-alkyl-2-acetyl-sn-glycero-3-phosphocholine + H2O = a 1-O-alkyl-sn-glycero-3-phosphocholine + acetate + H(+). It carries out the reaction a 1-hexadecanoyl-2-acyl-sn-glycero-3-phosphocholine + (24S)-hydroxycholesterol = (24S)-24-hydroxycholesterol ester + 1-hexadecanoyl-sn-glycero-3-phosphocholine. The enzyme catalyses (24S)-hydroxycholesterol + 1-hexadecanoyl-2-(9Z,12Z-octadecadienoyl)-sn-glycero-3-phosphocholine = (24S)-hydroxycholesterol 3-linoleoate + 1-hexadecanoyl-sn-glycero-3-phosphocholine. The catalysed reaction is 1-hexadecanoyl-2-(5Z,8Z,11Z,14Z-eicosatetraenoyl)-sn-glycero-3-phosphocholine + cholesterol = cholesteryl (5Z,8Z,11Z,14Z)-eicosatetraenoate + 1-hexadecanoyl-sn-glycero-3-phosphocholine. It catalyses the reaction 1-hexadecanoyl-2-(9Z-octadecenoyl)-sn-glycero-3-phosphocholine + cholesterol = cholesteryl (9Z-octadecenoate) + 1-hexadecanoyl-sn-glycero-3-phosphocholine. It carries out the reaction 1-hexadecanoyl-2-(8Z,11Z,14Z-eicosatrienoyl)-sn-glycero-3-phosphocholine + cholesterol = cholesteryl (8Z,11Z,14Z)-eicosatrienoate + 1-hexadecanoyl-sn-glycero-3-phosphocholine. The enzyme catalyses 1-hexadecanoyl-2-(5Z,8Z,11Z-eicosatrienoyl)-sn-glycero-3-phosphocholine + cholesterol = cholesteryl (5Z,8Z,11Z)-eicosatrienoate + 1-hexadecanoyl-sn-glycero-3-phosphocholine. The catalysed reaction is 1-hexadecanoyl-2-(5Z,8Z,11Z,14Z,17Z-eicosapentaenoyl)-sn-glycero-3-phosphocholine + cholesterol = (5Z,8Z,11Z,14Z,17Z-eicosapentaenoyl)-cholesterol + 1-hexadecanoyl-sn-glycero-3-phosphocholine. It catalyses the reaction 1-hexadecanoyl-2-(9Z,12Z-octadecadienoyl)-sn-glycero-3-phosphocholine + cholesterol = cholesteryl (9Z,12Z)-octadecadienoate + 1-hexadecanoyl-sn-glycero-3-phosphocholine. It carries out the reaction 1-hexadecanoyl-2-(6Z,9Z,12Z-octadecatrienoyl)-sn-glycero-3-phosphocholine + cholesterol = (6Z,9Z,12Z-octadecatrienoyl)-cholesterol + 1-hexadecanoyl-sn-glycero-3-phosphocholine. The enzyme catalyses 1-hexadecanoyl-2-(11Z,14Z,17Z-eicosatrienoyl)-sn-glycero-3-phosphocholine + cholesterol = (11Z,14Z,17Z-eicosatrienoyl)-cholesterol + 1-hexadecanoyl-sn-glycero-3-phosphocholine. The catalysed reaction is 1-hexadecanoyl-2-(9Z,12Z,15Z-octadecatrienoyl)-sn-glycero-3-phosphocholine + cholesterol = (9Z,12Z,15Z-octadecatrienoyl)-cholesterol + 1-hexadecanoyl-sn-glycero-3-phosphocholine. It catalyses the reaction 1-hexadecanoyl-2-(9Z,12Z-octadecadienoyl)-sn-glycero-3-phosphocholine + H2O = (9Z,12Z)-octadecadienoate + 1-hexadecanoyl-sn-glycero-3-phosphocholine + H(+). It carries out the reaction 1-hexadecanoyl-2-(5Z,8Z,11Z,14Z-eicosatetraenoyl)-sn-glycero-3-phosphocholine + H2O = 1-hexadecanoyl-sn-glycero-3-phosphocholine + (5Z,8Z,11Z,14Z)-eicosatetraenoate + H(+). The enzyme catalyses a 1-O-alkyl-2-acetyl-sn-glycero-3-phosphocholine + 1-hexadecanoyl-sn-glycero-3-phosphocholine = 1-hexadecanoyl-2-acetyl-sn-glycero-3-phosphocholine + a 1-O-alkyl-sn-glycero-3-phosphocholine. With respect to regulation, APOA1 is the most potent activator in plasma. Also activated by APOE, APOC1 and APOA4. Functionally, central enzyme in the extracellular metabolism of plasma lipoproteins. Synthesized mainly in the liver and secreted into plasma where it converts cholesterol and phosphatidylcholines (lecithins) to cholesteryl esters and lysophosphatidylcholines on the surface of high and low density lipoproteins (HDLs and LDLs). The cholesterol ester is then transported back to the liver. Also produced in the brain by primary astrocytes, and esterifies free cholesterol on nascent APOE-containing lipoproteins secreted from glia and influences cerebral spinal fluid (CSF) APOE- and APOA1 levels. Together with APOE and the cholesterol transporter ABCA1, plays a key role in the maturation of glial-derived, nascent lipoproteins. Required for remodeling high-density lipoprotein particles into their spherical forms. Has a preference for plasma 16:0-18:2 or 18:O-18:2 phosphatidylcholines. Catalyzes the hydrolysis of 1-O-alkyl-2-acetyl-sn-glycero-3-phosphocholine (platelet-activating factor or PAF) to 1-O-alkyl-sn-glycero-3-phosphocholine (lyso-PAF). Also catalyzes the transfer of the acetate group from PAF to 1-hexadecanoyl-sn-glycero-3-phosphocholine forming lyso-PAF. Catalyzes the esterification of (24S)-hydroxycholesterol (24(S)OH-C), also known as cerebrosterol to produce 24(S)OH-C monoesters. The chain is Phosphatidylcholine-sterol acyltransferase (Lcat) from Mus musculus (Mouse).